Reading from the N-terminus, the 125-residue chain is Histone H1-like protein HC1 (125 aa).

It belongs to the histone H1/H5 family. HCT subfamily.

Functionally, might have a role analogous to that of eukaryotic histone proteins. This Chlamydia muridarum (strain MoPn / Nigg) protein is Histone H1-like protein HC1 (hctA).